A 274-amino-acid chain; its full sequence is 3-methyl-2-oxobutanoate hydroxymethyltransferase (274 aa).

Positions 44 and 83 each coordinate Mg(2+). Residues 44 to 45 (DS), D83, and K113 each bind 3-methyl-2-oxobutanoate. E115 serves as a coordination point for Mg(2+). E182 (proton acceptor) is an active-site residue.

It belongs to the PanB family. In terms of assembly, homodecamer; pentamer of dimers. The cofactor is Mg(2+).

The protein resides in the cytoplasm. It catalyses the reaction 3-methyl-2-oxobutanoate + (6R)-5,10-methylene-5,6,7,8-tetrahydrofolate + H2O = 2-dehydropantoate + (6S)-5,6,7,8-tetrahydrofolate. The protein operates within cofactor biosynthesis; (R)-pantothenate biosynthesis; (R)-pantoate from 3-methyl-2-oxobutanoate: step 1/2. Catalyzes the reversible reaction in which hydroxymethyl group from 5,10-methylenetetrahydrofolate is transferred onto alpha-ketoisovalerate to form ketopantoate. The sequence is that of 3-methyl-2-oxobutanoate hydroxymethyltransferase from Campylobacter jejuni subsp. jejuni serotype O:23/36 (strain 81-176).